Here is a 679-residue protein sequence, read N- to C-terminus: Protein asunder (679 aa).

Residues 519 to 541 (RLKVNKTKDQYRLFYRELEQLIQ) are a coiled coil. Residues 564–610 (GDASNKSDPSAAHLRSYTESPLSPERLEPTNSVNSSSSSILKASKRR) form a disordered region. Positions 604–610 (LKASKRR) match the Nuclear localization signal (NLS) motif.

It belongs to the Integrator subunit 13 family. Belongs to the multiprotein complex Integrator, at least composed of IntS1, IntS2, IntS3, IntS4, omd/IntS5, IntS6, defl/IntS7, IntS8, IntS9, IntS10, IntS11, IntS12, asun/IntS13, IntS14 and IntS15. The core complex associates with protein phosphatase 2A subunits mts/PP2A and Pp2A-29B, to form the Integrator-PP2A (INTAC) complex. In terms of processing, phosphorylated.

It is found in the nucleus. Its subcellular location is the cytoplasm. It localises to the perinuclear region. Its function is as follows. Component of the integrator complex, a multiprotein complex that terminates RNA polymerase II (Pol II) transcription in the promoter-proximal region of genes. The integrator complex provides a quality checkpoint during transcription elongation by driving premature transcription termination of transcripts that are unfavorably configured for transcriptional elongation: the complex terminates transcription by (1) catalyzing dephosphorylation of the C-terminal domain (CTD) of Pol II subunit Polr2A/Rbp1 and Spt5, and (2) degrading the exiting nascent RNA transcript via endonuclease activity. The integrator complex is also involved in the 3'-end processing of the U7 snRNA, and also the spliceosomal snRNAs U1, U2, U4 and U5. This Drosophila mojavensis (Fruit fly) protein is Protein asunder (asun).